The chain runs to 375 residues: Carbamoyl phosphate synthase small chain (375 aa).

Residues 1–186 (MKAILALEDG…IVDGTYAWPG (186 aa)) are CPSase. S45, G238, and G240 together coordinate L-glutamine. Residues 190–375 (RLVVFDMGIK…RNLVRKETGK (186 aa)) form the Glutamine amidotransferase type-1 domain. Residue C265 is the Nucleophile of the active site. L266, Q269, N307, G309, and F310 together coordinate L-glutamine. Catalysis depends on residues H348 and E350.

This sequence belongs to the CarA family. Composed of two chains; the small (or glutamine) chain promotes the hydrolysis of glutamine to ammonia, which is used by the large (or ammonia) chain to synthesize carbamoyl phosphate. Tetramer of heterodimers (alpha,beta)4.

The catalysed reaction is hydrogencarbonate + L-glutamine + 2 ATP + H2O = carbamoyl phosphate + L-glutamate + 2 ADP + phosphate + 2 H(+). The enzyme catalyses L-glutamine + H2O = L-glutamate + NH4(+). It participates in amino-acid biosynthesis; L-arginine biosynthesis; carbamoyl phosphate from bicarbonate: step 1/1. The protein operates within pyrimidine metabolism; UMP biosynthesis via de novo pathway; (S)-dihydroorotate from bicarbonate: step 1/3. Functionally, small subunit of the glutamine-dependent carbamoyl phosphate synthetase (CPSase). CPSase catalyzes the formation of carbamoyl phosphate from the ammonia moiety of glutamine, carbonate, and phosphate donated by ATP, constituting the first step of 2 biosynthetic pathways, one leading to arginine and/or urea and the other to pyrimidine nucleotides. The small subunit (glutamine amidotransferase) binds and cleaves glutamine to supply the large subunit with the substrate ammonia. The chain is Carbamoyl phosphate synthase small chain from Solidesulfovibrio magneticus (strain ATCC 700980 / DSM 13731 / RS-1) (Desulfovibrio magneticus).